The sequence spans 339 residues: Ribosome biogenesis protein BRX1 homolog (339 aa).

Residues 1–34 form a disordered region; the sequence is MSAYKRKRGSLPEVATNTKKAKKQLAGSEQEATA. Residues 53 to 242 form the Brix domain; the sequence is ERVLIFSSRG…LIKIFKGSFG (190 aa). The tract at residues 304–339 is disordered; the sequence is AEEKPQVIETEPPAPKPKMKRKDKQFKRQRMAKKRM. Residues 320–339 show a composition bias toward basic residues; the sequence is PKMKRKDKQFKRQRMAKKRM.

This sequence belongs to the BRX1 family. In terms of tissue distribution, ubiquitous.

The protein localises to the nucleus. It is found in the nucleolus. Its function is as follows. Required for biogenesis of the 60S ribosomal subunit. This Xenopus laevis (African clawed frog) protein is Ribosome biogenesis protein BRX1 homolog (brix1).